Reading from the N-terminus, the 117-residue chain is Immunoglobulin kappa variable 1D-17 (117 aa).

An N-terminal signal peptide occupies residues 1–22; sequence MDMRVPAQLLGLLLLWFPGARC. The tract at residues 23-45 is framework-1; the sequence is NIQMTQSPSAMSASVGDRVTITC. Positions 23-117 constitute an Ig-like domain; it reads NIQMTQSPSA…YYCLQHNSYP (95 aa). C45 and C110 form a disulfide bridge. Positions 46-56 are complementarity-determining-1; sequence RARQGISNYLA. The interval 57 to 71 is framework-2; that stretch reads WFQQKPGKVPKHLIY. Positions 72-78 are complementarity-determining-2; the sequence is AASSLQS. Residues 79 to 110 form a framework-3 region; sequence GVPSRFSGSGSGTEFTLTISSLQPEDFATYYC. A complementarity-determining-3 region spans residues 111 to 117; sequence LQHNSYP.

As to quaternary structure, immunoglobulins are composed of two identical heavy chains and two identical light chains; disulfide-linked.

Its subcellular location is the secreted. It localises to the cell membrane. Its function is as follows. V region of the variable domain of immunoglobulin light chains that participates in the antigen recognition. Immunoglobulins, also known as antibodies, are membrane-bound or secreted glycoproteins produced by B lymphocytes. In the recognition phase of humoral immunity, the membrane-bound immunoglobulins serve as receptors which, upon binding of a specific antigen, trigger the clonal expansion and differentiation of B lymphocytes into immunoglobulins-secreting plasma cells. Secreted immunoglobulins mediate the effector phase of humoral immunity, which results in the elimination of bound antigens. The antigen binding site is formed by the variable domain of one heavy chain, together with that of its associated light chain. Thus, each immunoglobulin has two antigen binding sites with remarkable affinity for a particular antigen. The variable domains are assembled by a process called V-(D)-J rearrangement and can then be subjected to somatic hypermutations which, after exposure to antigen and selection, allow affinity maturation for a particular antigen. This is Immunoglobulin kappa variable 1D-17 from Homo sapiens (Human).